The primary structure comprises 361 residues: Allatostatin-A receptor (361 aa).

Over 1 to 46 (MESTEDEFYTICLNLTAEDPSFGNCNYTTDFENGELLEKVVSRVVP) the chain is Extracellular. N14 and N26 each carry an N-linked (GlcNAc...) asparagine glycan. The helical transmembrane segment at 47 to 67 (IFFGFIGIVGLVGNALVVLVV) threads the bilayer. Topologically, residues 68–78 (AANPGMRSTTN) are cytoplasmic. A helical membrane pass occupies residues 79–99 (LLIINLAVADLLFVIFCVPFT). The Extracellular segment spans residues 100–116 (ATDYVMPRWPFGDWWCK). C115 and C196 form a disulfide bridge. A helical membrane pass occupies residues 117–137 (VVQYFIVVTAHASVYTLVLMS). The Cytoplasmic portion of the chain corresponds to 138-158 (LDRFMAVVHPIASMSIRTEKN). A helical membrane pass occupies residues 159-179 (ALLAIACIWVVILTTAIPVGI). The Extracellular portion of the chain corresponds to 180–212 (CHGEREYSYFNRNHSSCVFLEERGYSKLGFQMS). A glycan (N-linked (GlcNAc...) asparagine) is linked at N192. Residues 213–233 (FFLSSYVIPLALISVLYMCML) traverse the membrane as a helical segment. Residues 234-259 (TRLWKSAPGGRVSAESRRGRKKVTRM) are Cytoplasmic-facing. A helical membrane pass occupies residues 260–280 (VVVVVVVFAVCWCPIQIILLV). Topologically, residues 281–296 (KALNKYHITYFTVTAQ) are extracellular. A helical membrane pass occupies residues 297–317 (IVSHVLAYMNSCVNPVLYAFL). Topologically, residues 318–361 (SENFRVAFRKVMYCPPPYNDGFSGRPQATKTTRTGNGNSCHDIV) are cytoplasmic. Residues 341-361 (GRPQATKTTRTGNGNSCHDIV) are disordered. The segment covering 343-361 (PQATKTTRTGNGNSCHDIV) has biased composition (polar residues).

It belongs to the G-protein coupled receptor 1 family. Expressed in the midgut and, to a lesser extent, in the fore- and hindgut of fifth instar larvae. Also highly expressed in the brain of fourth and fifth instar larvae.

The protein resides in the cell membrane. Acts as a receptor for A-type allatostatin neuropeptide hormones. The polypeptide is Allatostatin-A receptor (Bombyx mori (Silk moth)).